Consider the following 309-residue polypeptide: Transaldolase (309 aa).

Catalysis depends on Lys-125, which acts as the Schiff-base intermediate with substrate.

The protein belongs to the transaldolase family. Type 1 subfamily. Homodimer.

It localises to the cytoplasm. The catalysed reaction is D-sedoheptulose 7-phosphate + D-glyceraldehyde 3-phosphate = D-erythrose 4-phosphate + beta-D-fructose 6-phosphate. Its pathway is carbohydrate degradation; pentose phosphate pathway; D-glyceraldehyde 3-phosphate and beta-D-fructose 6-phosphate from D-ribose 5-phosphate and D-xylulose 5-phosphate (non-oxidative stage): step 2/3. In terms of biological role, transaldolase is important for the balance of metabolites in the pentose-phosphate pathway. The protein is Transaldolase of Pseudomonas syringae pv. tomato (strain ATCC BAA-871 / DC3000).